A 117-amino-acid chain; its full sequence is Hemerythrin subunit beta (117 aa).

7 residues coordinate Fe cation: H24, H53, E57, H72, H76, H105, and D110.

Belongs to the hemerythrin family. In terms of assembly, octamer composed of two types of chains: alpha and beta.

Its function is as follows. Hemerythrin is a respiratory protein in blood cells of certain marine worms. The oxygen-binding site in each chain contains two iron atoms. The sequence is that of Hemerythrin subunit beta from Lingula reevii (Inarticulated brachiopod).